We begin with the raw amino-acid sequence, 307 residues long: Thioredoxin-related transmembrane protein 2-B (307 aa).

Positions 1–19 are cleaved as a signal peptide; the sequence is MALLTPLFAFLYHLPQVYK. The Extracellular portion of the chain corresponds to 20-111; sequence WLLKPYYIAS…VILFFRLDIR (92 aa). A helical transmembrane segment spans residues 112–132; sequence LGLLYLTLCIVFLMTCKPPLY. The 138-residue stretch at 132–269 folds into the Thioredoxin domain; sequence YMGPEYIKYF…LYQKSKKLGK (138 aa). Over 133–307 the chain is Cytoplasmic; that stretch reads MGPEYIKYFS…AMDTESKKDK (175 aa). Residues 268-307 form a disordered region; the sequence is GKTKEKLERPSELVFSTVPEEEEPEAETISAMDTESKKDK. Basic and acidic residues predominate over residues 269-278; sequence KTKEKLERPS. The short motif at 304–307 is the Di-lysine motif element; that stretch reads KKDK.

As to quaternary structure, monomer. Homodimer; disulfide-linked. Occurs in both reduced and oxidized monomeric form. Oxidative conditions increase homodimerization.

The protein resides in the endoplasmic reticulum membrane. It localises to the mitochondrion membrane. Functionally, endoplasmic reticulum and mitochondria-associated protein that probably functions as a regulator of cellular redox state and thereby regulates protein post-translational modification, protein folding and mitochondrial activity. This is Thioredoxin-related transmembrane protein 2-B (tmx2b) from Danio rerio (Zebrafish).